Consider the following 332-residue polypeptide: UPF0158 protein TC_0713 (332 aa).

2 disordered regions span residues 196-215 and 291-332; these read ALNPRPKRGRPPKQSAKVEA and LGYD…KARS. The span at 295–316 shows a compositional bias: acidic residues; it reads GDGDASDFFGEEYDDDDDDDDD. Basic residues predominate over residues 320-332; sequence KKAAKRGRKKARS.

The protein belongs to the UPF0158 family.

The polypeptide is UPF0158 protein TC_0713 (Chlamydia muridarum (strain MoPn / Nigg)).